The chain runs to 405 residues: DNA primase DnaG (405 aa).

In terms of domain architecture, Toprim spans 172–248 (DSIIVVEGRA…HIDYIARAPP (77 aa)). Positions 178, 222, and 224 each coordinate Mg(2+). Residues 279–302 (AAGEKTESQMSPQQPQLTQTQPTT) form a disordered region. The span at 290–302 (PQQPQLTQTQPTT) shows a compositional bias: low complexity.

This sequence belongs to the archaeal DnaG primase family. In terms of assembly, forms a ternary complex with MCM helicase and DNA. Component of the archaeal exosome complex. Mg(2+) is required as a cofactor.

The catalysed reaction is ssDNA + n NTP = ssDNA/pppN(pN)n-1 hybrid + (n-1) diphosphate.. RNA polymerase that catalyzes the synthesis of short RNA molecules used as primers for DNA polymerase during DNA replication. Also part of the exosome, which is a complex involved in RNA degradation. Acts as a poly(A)-binding protein that enhances the interaction between heteromeric, adenine-rich transcripts and the exosome. This Pyrobaculum islandicum (strain DSM 4184 / JCM 9189 / GEO3) protein is DNA primase DnaG.